A 239-amino-acid chain; its full sequence is Phosphothreonine lyase OspF (239 aa).

The active-site Proton donor is His104. The active-site Proton acceptor is Lys134.

The protein belongs to the phosphothreonine lyase family.

The protein localises to the secreted. Inhibited by the tyrosine phosphatase inhibitor vanadate. In terms of biological role, catalyzes the removal of the phosphate group from the phosphothreonine in the mitogen-activated protein kinases such as MAPK2/ERK2, MAPK3/ERK1, MAPK8 and MAPK14 in an irreversible reaction, thus preventing the downstream phosphorylation of histone H3. This epigenetic modification results in inhibition of the transcription of a specific subset of pro-inflammatory genes, and ultimately to a reduced immune response against the invading pathogen. The diminished immune response enhances the bacterium's ability to disseminate and multiply within the host. The polypeptide is Phosphothreonine lyase OspF (ospF) (Shigella flexneri).